Here is a 326-residue protein sequence, read N- to C-terminus: uncharacterized protein (326 aa).

This sequence belongs to the transferase hexapeptide repeat family.

This is an uncharacterized protein from Escherichia coli (strain K12).